Here is a 258-residue protein sequence, read N- to C-terminus: GCN5-related N-acetyltransferase 2, chloroplastic (258 aa).

Residues Met1–Arg58 constitute a chloroplast transit peptide. An interaction with begomoviruses NSP protein region spans residues Ile107–Asp194. The N-acetyltransferase domain occupies Ile107–Lys258. Residues Val195–Val197, Gly203–Lys208, Asp231–Gln233, and Tyr238 each bind acetyl-CoA. Catalysis depends on Tyr238, which acts as the Proton donor.

This sequence belongs to the acetyltransferase family. GNAT subfamily. In terms of assembly, oligomer. Interacts with begomoviruses NSP but not with CP. This interaction may allow NSP to recruit NSI monomers to acetylate viral genome-bound CP and thus regulate nuclear export of viral genome by NSP. In terms of processing, S-sulfhydrated and activated by hydrogen sulfide H(2)S to promote melatonin accumulation and subsequent melatonin-dependent stomotal closure to combat osmotic stress. Post-translationally, autoacetylated. As to expression, highly expressed in cauline leaves and seeds, at lower levels in stems, siliques, inflorescences and rosettes leaves and at very low levels in roots. Expressed in the xylem parenchyma and phloem of the leaves and root, and in guard cells of young leaves.

It is found in the plastid. Its subcellular location is the chloroplast. The enzyme catalyses 5-methoxytryptamine + acetyl-CoA = melatonin + CoA + H(+). The catalysed reaction is L-lysyl-[histone] + acetyl-CoA = N(6)-acetyl-L-lysyl-[histone] + CoA + H(+). It carries out the reaction L-lysyl-[protein] + acetyl-CoA = N(6)-acetyl-L-lysyl-[protein] + CoA + H(+). It catalyses the reaction serotonin + acetyl-CoA = N-acetylserotonin + CoA + H(+). The enzyme catalyses N-terminal L-alanyl-[protein] + acetyl-CoA = N-terminal N(alpha)-acetyl-L-alanyl-[protein] + CoA + H(+). The catalysed reaction is N-terminal L-seryl-[protein] + acetyl-CoA = N-terminal N(alpha)-acetyl-L-seryl-[protein] + CoA + H(+). It carries out the reaction N-terminal L-valyl-[protein] + acetyl-CoA = N-terminal N(alpha)-acetyl-L-valyl-[protein] + CoA + H(+). It catalyses the reaction N-terminal glycyl-[protein] + acetyl-CoA = N-terminal N(alpha)-acetylglycyl-[protein] + CoA + H(+). The enzyme catalyses an N-terminal L-alpha-aminoacyl-[protein] + acetyl-CoA = N-terminal N(alpha)-acetyl-L-alpha-aminoacyl-[protein] + CoA + H(+). The catalysed reaction is N-terminal L-threonyl-[protein] + acetyl-CoA = N-terminal N(alpha)-acetyl-L-threonyl-[protein] + CoA + H(+). It carries out the reaction N-terminal L-methionyl-[protein] + acetyl-CoA = N-terminal N(alpha)-acetyl-L-methionyl-[protein] + CoA + H(+). It catalyses the reaction N-terminal L-leucyl-[protein] + acetyl-CoA = N-terminal N(alpha)-acetyl-L-leucyl-[protein] + CoA + H(+). Inhibited by the viral nuclear shuttle protein (NSP) that binds to the region required for oligomerization. Functionally, protein acetyltransferase with dual specificity triggering both N-alpha-acetylation (NTA), with a preference for alanine, serine, threonine, methionine and to a lower extent valine as substrates (can also use glycine and leucine), and epsilon-lysine acetylation (KA) of several plastid proteins. Triggers lysine acetylation in KEA1 and KEA2. Acetylates in vitro histones H2A and H3. Does not act as a transcriptional activator but required for the dynamic reorganization of thylakoid protein complexes and grana during photosynthetic state transitions. Involved in melatonin biosynthesis by catalyzing the formation of N-acetylserotonin (NAS) from serotonin and of melatonin (N-acetyl-5-methoxytryptamine) from 5-methoxytryptamine (5-MT). By triggering melatonin biosynthesis, contributes to the chloroplast protein quality control (CPQC), which plays a pivotal role in starch synthesis, and confers melatonin-associated tolerance to high light (HL) stress. Prevents the accumulation of oil and anthocyanin content in mature seeds and avoids seed germination in a melatonin-dependent manner, but promotes mucilage production in the seed coat. Contributes to melatonin-mediated anthocyanin production in cold-exposed seedlings. Implicated in melatonin-monitored circadian dynamics of stomatal aperture to minimize night water loss and promote drought tolerance, partly by triggering hydrogen sulfide H(2)S-dependent stomotal closure in response to osmotic stress. Its function is as follows. (Microbial infection) Required for begomovirus infection and systemic spread. In case of begomoviruses infection, acetylates the capsid protein (CP), but not the nuclear shuttle protein (NSP). Stimulates melatonin-triggered defense responses to the necrotrophic Botrytis cinerea. The chain is GCN5-related N-acetyltransferase 2, chloroplastic from Arabidopsis thaliana (Mouse-ear cress).